We begin with the raw amino-acid sequence, 1520 residues long: DNA-directed RNA polymerase subunit beta'' (1520 aa).

The Zn(2+) site is built by C220, C296, C303, and C306. Basic and acidic residues-rich tracts occupy residues 645–654 (TREEEYRTRE) and 664–674 (PENKYRTREGE). Disordered regions lie at residues 645 to 676 (TREEEYRTREEDSEDEYESPENKYRTREGEGE) and 705 to 786 (YRTL…KKEG). 2 stretches are compositionally biased toward acidic residues: residues 730-748 (GEYEILEEDSEEEYGSSED) and 756-779 (TLEEDSEEDSEEDSEDEYGSPEED).

Belongs to the RNA polymerase beta' chain family. RpoC2 subfamily. In terms of assembly, in plastids the minimal PEP RNA polymerase catalytic core is composed of four subunits: alpha, beta, beta', and beta''. When a (nuclear-encoded) sigma factor is associated with the core the holoenzyme is formed, which can initiate transcription. It depends on Zn(2+) as a cofactor.

The protein resides in the plastid. It localises to the chloroplast. It catalyses the reaction RNA(n) + a ribonucleoside 5'-triphosphate = RNA(n+1) + diphosphate. DNA-dependent RNA polymerase catalyzes the transcription of DNA into RNA using the four ribonucleoside triphosphates as substrates. The sequence is that of DNA-directed RNA polymerase subunit beta'' from Sorghum bicolor (Sorghum).